The primary structure comprises 522 residues: FAD-dependent monooxygenase fsr3 (522 aa).

The segment at 1–27 (MKNTQTNGTHPIIDKKPNGTLNGDHQE) is disordered. Position 164 (R164) interacts with FAD. Residue R245 is part of the active site. FAD is bound by residues D369 and A382.

It belongs to the paxM FAD-dependent monooxygenase family. It depends on FAD as a cofactor.

It participates in polyketide biosynthesis. Its function is as follows. FAD-dependent monooxygenase; part of the gene cluster that mediates the biosynthesis of fusarubins, highly pigmented naphthoquinones responsible for the coloration of the fruiting bodies. The non-reducing polyketide synthase FSR1 is responsible for the condensation of seven acetyl-CoA units to yield a haptaketide. After rings A and B are formed by aldol-type cyclization, the PKS-derived product is released as 6-O-demethylfusarubinaldehyde. Then, two hydroxyl groups at C-5 and C-10 are incorporated by FSR3, and simultaneously hydroxyl groups at C-6 and C-8 are methylated by FSR2. The aldehyde is, on the one hand, reduced by FSR3 to 8-O-methylfusarubin alcohol, which equilibrates mainly with 8-O-methylfusarubin and only small amounts of 8-O-methylnectriafurone. On the other hand, the aldehyde can be oxidized to form 8-O-methylfusarubinic acid, a reaction driven by FSR3 equilibrating with 8-O-methylfusarubinlactone, finally resulting in 8-O-methylanhydrofusarubinlactol after a further reduction step and loss of water. 8-O-Methylfusarubinic acid can also undergo decarboxylation, resulting in 8-O-methyl-13-hydroxynorjavanicin after another hydroxylation step at C-13. Both steps are most likely also accomplished by FSR3. No enzymatic function has been determined so far for either FSR4 and FSR5. Their deletion does not alter the product spectrum, but the possibility that they catalyze specific enzymatic steps during perithecium development cannot be ruled out. FSR4 might possess a regulatory function in the biosynthesis of fusarubins. The chain is FAD-dependent monooxygenase fsr3 from Gibberella fujikuroi (strain CBS 195.34 / IMI 58289 / NRRL A-6831) (Bakanae and foot rot disease fungus).